The sequence spans 195 residues: Proteasome subunit beta 1 (195 aa).

A propeptide spans Met1–Ala6 (removed in mature form; by autocatalysis). The active-site Nucleophile is Thr7.

It belongs to the peptidase T1B family. In terms of assembly, the 20S proteasome core is composed of 14 alpha and 14 beta subunits that assemble into four stacked heptameric rings, resulting in a barrel-shaped structure. The two inner rings, each composed of seven catalytic beta subunits, are sandwiched by two outer rings, each composed of seven alpha subunits. The catalytic chamber with the active sites is on the inside of the barrel. Has a gated structure, the ends of the cylinder being occluded by the N-termini of the alpha-subunits. Is capped at one or both ends by the proteasome regulatory ATPase, PAN.

Its subcellular location is the cytoplasm. The catalysed reaction is Cleavage of peptide bonds with very broad specificity.. With respect to regulation, the formation of the proteasomal ATPase PAN-20S proteasome complex, via the docking of the C-termini of PAN into the intersubunit pockets in the alpha-rings, triggers opening of the gate for substrate entry. Interconversion between the open-gate and close-gate conformations leads to a dynamic regulation of the 20S proteasome proteolysis activity. In terms of biological role, component of the proteasome core, a large protease complex with broad specificity involved in protein degradation. The protein is Proteasome subunit beta 1 of Sulfolobus acidocaldarius (strain ATCC 33909 / DSM 639 / JCM 8929 / NBRC 15157 / NCIMB 11770).